We begin with the raw amino-acid sequence, 94 residues long: DNA-directed RNA polymerase subunit omega (94 aa).

The protein belongs to the RNA polymerase subunit omega family. As to quaternary structure, the RNAP catalytic core consists of 2 alpha, 1 beta, 1 beta' and 1 omega subunit. When a sigma factor is associated with the core the holoenzyme is formed, which can initiate transcription.

It catalyses the reaction RNA(n) + a ribonucleoside 5'-triphosphate = RNA(n+1) + diphosphate. Promotes RNA polymerase assembly. Latches the N- and C-terminal regions of the beta' subunit thereby facilitating its interaction with the beta and alpha subunits. In Bifidobacterium longum subsp. infantis (strain ATCC 15697 / DSM 20088 / JCM 1222 / NCTC 11817 / S12), this protein is DNA-directed RNA polymerase subunit omega.